Consider the following 807-residue polypeptide: Phenylalanine--tRNA ligase beta subunit (807 aa).

Residues 39 to 153 (SARSQGVVVG…EIPAVGTPVA (115 aa)) enclose the tRNA-binding domain. One can recognise a B5 domain in the interval 407–491 (RTPVPLQLRR…RLVGFDKFGS (85 aa)). 4 residues coordinate Mg(2+): Asp-469, Asp-475, Glu-478, and Glu-479. Residues 713–806 (PTVPASERDL…LSKQFKAELR (94 aa)) enclose the FDX-ACB domain.

The protein belongs to the phenylalanyl-tRNA synthetase beta subunit family. Type 1 subfamily. As to quaternary structure, tetramer of two alpha and two beta subunits. Mg(2+) is required as a cofactor.

The protein localises to the cytoplasm. It carries out the reaction tRNA(Phe) + L-phenylalanine + ATP = L-phenylalanyl-tRNA(Phe) + AMP + diphosphate + H(+). The chain is Phenylalanine--tRNA ligase beta subunit from Synechococcus sp. (strain CC9902).